The sequence spans 137 residues: Large ribosomal subunit protein uL16 (137 aa).

It belongs to the universal ribosomal protein uL16 family. As to quaternary structure, part of the 50S ribosomal subunit.

Binds 23S rRNA and is also seen to make contacts with the A and possibly P site tRNAs. This is Large ribosomal subunit protein uL16 from Bartonella bacilliformis (strain ATCC 35685 / KC583 / Herrer 020/F12,63).